The sequence spans 216 residues: Protein E4.2 (216 aa).

This chain is Protein E4.2, found in Pantherophis guttatus (Corn snake).